The sequence spans 229 residues: MAEDFGFFSSSESGAPEAAEEDPAAAFLAQQESEIAGIENDSGFGAPAASQVASAQPGLASGGGSEDMGTTVNGDVFQEANGPADGYAAIAQADRLTQEPESIRKWREEQKKRLQELDAASKVTEQEWREKAKKDLEEWNQRQSEQVEKNKINNRIADKAFYQQPDADTIGYVASEEAFVKESKEETPGTEWEKVAQLCDFNPKSSKQCKDVSRLRSVLMSLKQTPLSR.

Low complexity-rich tracts occupy residues 1 to 17 (MAED…GAPE) and 45 to 58 (GAPA…AQPG). Residues 1 to 80 (MAEDFGFFSS…TVNGDVFQEA (80 aa)) form a disordered region. Residues S11 and S13 each carry the phosphoserine modification. The segment at 93–155 (ADRLTQEPES…QVEKNKINNR (63 aa)) is involved in binding clathrin heavy chain. T187 bears the Phosphothreonine mark. A disulfide bridge connects residues C199 and C209. K204 bears the N6-acetyllysine mark. S217 carries the phosphoserine modification.

The protein belongs to the clathrin light chain family. As to quaternary structure, clathrin coats are formed from molecules containing 3 heavy chains and 3 light chains. Interacts (via N-terminus) with HIP1. Interacts with HIP1R.

The protein localises to the cytoplasmic vesicle membrane. It is found in the membrane. Its subcellular location is the coated pit. Clathrin is the major protein of the polyhedral coat of coated pits and vesicles. The protein is Clathrin light chain B (Cltb) of Rattus norvegicus (Rat).